A 220-amino-acid polypeptide reads, in one-letter code: Sugar transporter SWEET1 (220 aa).

The next 7 helical transmembrane spans lie at 9–29 (LMTFIQFCATFITITLFIMPL), 44–64 (VAGLQFISSVLNCFLWISYAL), 70–90 (TMLFVNSIGMMFSIYYVFNYW), 106–126 (VMIACVLAITIISISYYNTVD), 138–158 (LSSVVCVLMFASPLEKMAIVI), 167–187 (IINVAILSLLCGLSWTIFGLL), and 191–211 (IYIYLPNILASILSFVQLTLI). One can recognise a MtN3/slv 1 domain in the interval 12-92 (FIQFCATFIT…IYYVFNYWKN (81 aa)). Positions 134–217 (RLGFLSSVVC…LTLIKLYPPQ (84 aa)) constitute a MtN3/slv 2 domain.

Belongs to the SWEET sugar transporter family.

It localises to the golgi apparatus membrane. The protein localises to the cell membrane. Mediates both low-affinity uptake and efflux of sugar across the membrane. The polypeptide is Sugar transporter SWEET1 (slc50a1) (Dictyostelium discoideum (Social amoeba)).